The chain runs to 193 residues: Interleukin-18-binding protein (193 aa).

Positions 1–28 (MTMRHCWTAGPSSWWVLLLYVHVILARA) are cleaved as a signal peptide. The Ig-like C2-type domain maps to 60–161 (PALDVIWPEK…QVAQYHIILA (102 aa)). Asparagine 74, asparagine 98, asparagine 120, and asparagine 142 each carry an N-linked (GlcNAc...) asparagine glycan. Residues cysteine 81 and cysteine 145 are joined by a disulfide bond. Residues 172-185 (SPSQETLSSHSPVS) show a composition bias toward polar residues. The tract at residues 172-193 (SPSQETLSSHSPVSRSAGPGVA) is disordered.

It is found in the secreted. Binds to IL-18 and inhibits its activity. Functions as an inhibitor of the early TH1 cytokine response. This is Interleukin-18-binding protein (Il18bp) from Mus musculus (Mouse).